Here is a 246-residue protein sequence, read N- to C-terminus: Large ribosomal subunit protein uL4 (246 aa).

Residues 37–103 (AAQANRKQDY…TEKDRSLDLN (67 aa)) form a disordered region. Residues 92–103 (PKTEKDRSLDLN) are compositionally biased toward basic and acidic residues.

Belongs to the universal ribosomal protein uL4 family. In terms of assembly, part of the 50S ribosomal subunit. Interacts weakly with proteins L18e, L24 and L37e. Has been cross-linked to L18e.

Functionally, one of the primary rRNA binding proteins, this protein initially binds near the 5'-end of the 23S rRNA. It is important during the early stages of 50S assembly. Makes multiple contacts with different domains of the 23S rRNA in the assembled 50S subunit. Its function is as follows. Forms part of the polypeptide exit tunnel, in which it helps forms a bend with protein L22. Contacts the macrolide antibiotic spiramycin in the polypeptide exit tunnel. The protein is Large ribosomal subunit protein uL4 (rpl4) of Haloarcula marismortui (strain ATCC 43049 / DSM 3752 / JCM 8966 / VKM B-1809) (Halobacterium marismortui).